The primary structure comprises 138 residues: Endoribonuclease YbeY (138 aa).

His-106, His-110, and Asp-116 together coordinate Zn(2+).

This sequence belongs to the endoribonuclease YbeY family. Zn(2+) is required as a cofactor.

Its subcellular location is the cytoplasm. Functionally, single strand-specific metallo-endoribonuclease involved in late-stage 70S ribosome quality control and in maturation of the 3' terminus of the 16S rRNA. This is Endoribonuclease YbeY from Phocaeicola vulgatus (strain ATCC 8482 / DSM 1447 / JCM 5826 / CCUG 4940 / NBRC 14291 / NCTC 11154) (Bacteroides vulgatus).